Consider the following 31-residue polypeptide: Cyclotide cter-D (31 aa).

Residues 1 to 31 (GIPCAESCVWIPCTVTALLGCSCKDKVCYLN) constitute a cross-link (cyclopeptide (Gly-Asn)). Disulfide bonds link Cys-4/Cys-21, Cys-8/Cys-23, and Cys-13/Cys-28.

Post-translationally, contains 3 disulfide bonds. This is a cyclic peptide. In terms of tissue distribution, expressed in root, seed and nodule but not in flower, stem, shoot, leaf and pod.

Its function is as follows. Probably participates in a plant defense mechanism. This chain is Cyclotide cter-D, found in Clitoria ternatea (Butterfly pea).